Consider the following 353-residue polypeptide: Cyclin-dependent kinase-like 1 (353 aa).

Residues 4–286 enclose the Protein kinase domain; that stretch reads YDRLSKLGEG…CSELMLHGIF (283 aa). Residues 10-18 and Lys-33 each bind ATP; that span reads LGEGSYGVV. Asp-126 functions as the Proton acceptor in the catalytic mechanism. The tract at residues 331 to 353 is disordered; the sequence is GGNHGNNNNNGNGINRNFLPTIS. The segment covering 335–347 has biased composition (low complexity); the sequence is GNNNNNGNGINRN.

Belongs to the protein kinase superfamily. Ser/Thr protein kinase family. As to expression, specifically expressed in head and tail ciliated sensory neurons.

The protein resides in the cell projection. It localises to the cilium. The catalysed reaction is L-seryl-[protein] + ATP = O-phospho-L-seryl-[protein] + ADP + H(+). The enzyme catalyses L-threonyl-[protein] + ATP = O-phospho-L-threonyl-[protein] + ADP + H(+). Functionally, modulates cilium assembly. This chain is Cyclin-dependent kinase-like 1, found in Caenorhabditis elegans.